Consider the following 435-residue polypeptide: Diaminobutyrate--2-oxoglutarate transaminase (435 aa).

Lys266 is subject to N6-(pyridoxal phosphate)lysine.

Belongs to the class-III pyridoxal-phosphate-dependent aminotransferase family. Requires pyridoxal 5'-phosphate as cofactor.

It catalyses the reaction L-2,4-diaminobutanoate + 2-oxoglutarate = L-aspartate 4-semialdehyde + L-glutamate. Its pathway is amine and polyamine biosynthesis; ectoine biosynthesis; L-ectoine from L-aspartate 4-semialdehyde: step 1/3. In terms of biological role, catalyzes reversively the conversion of L-aspartate beta-semialdehyde (ASA) to L-2,4-diaminobutyrate (DABA) by transamination with L-glutamate. In Bordetella bronchiseptica (strain ATCC BAA-588 / NCTC 13252 / RB50) (Alcaligenes bronchisepticus), this protein is Diaminobutyrate--2-oxoglutarate transaminase (ectB).